A 372-amino-acid chain; its full sequence is MKTRLALPCLLGSLLLSSAVHAASALVPPKGYYAALEIRKGEAQACQAVPEPYTGELVFRSKYEGSDSARSTLNKKAEKAFRAKTKPITEIERGVSRMVMRYMEKGRLRRAGMRPGLLDAWAEDDALLSTEYNHTGKSMRKWALGSLAGAYLRLKFSTSQPLAAYPEQAKRIEAWFAKVGDQVIKDWSDLPLKQINNHSYWAAWSVMAAGVATNRRPLFDWAVEQFHIAAKQVDPRGFLANELKRRQRALAYHNYSLPPLMMIAAFAQANGVDLRGDNDGALGRLAGNVLAGVEDPEPFAERAGEDQDMEDLETDAKFSWLEPYCALYACSPALRERKAEMGPFKNFRLGGDVTRIFDPQEKPSKSTVGNAD.

An N-terminal signal peptide occupies residues 1–22; it reads MKTRLALPCLLGSLLLSSAVHA. Substrate is bound by residues 61–62, 134–135, and Tyr-252; these read SK and HT.

It belongs to the polysaccharide lyase 5 family.

The protein resides in the periplasm. It carries out the reaction Eliminative cleavage of alginate to give oligosaccharides with 4-deoxy-alpha-L-erythro-hex-4-enuronosyl groups at their non-reducing ends and beta-D-mannuronate at their reducing end.. Its activity is regulated as follows. Monovalent cations such as potassium and sodium enhance activity, as well as a combined action of these cations with magnesium. However, other cations like calcium, cobalt, manganese and zinc, or the presence of EDTA, do not affect the enzymatic activity. Its function is as follows. Catalyzes the depolymerization of alginate by cleaving the beta-1,4 glycosidic bond between two adjacent sugar residues via a beta-elimination mechanism. Degrades deacetylated polymannuronate alginate more efficiently than non-deacetylated polyM. Is able to degrade its own alginate, but at a lower efficiency than that produced from M.pyriferia and P.aeruginosa. May serve to degrade mislocalized alginate that is trapped in the periplasmic space. This is Alginate lyase from Azotobacter chroococcum mcd 1.